Reading from the N-terminus, the 931-residue chain is Dipeptidyl aminopeptidase A (931 aa).

The segment covering 1-13 has biased composition (basic residues); that stretch reads MSASTHSHKRKNS. The interval 1–58 is disordered; it reads MSASTHSHKRKNSHLFPQRKSSNSSMDKPFFPNNDSVANTDPQSNENGHTINEIRPTE. Residues 1–119 lie on the Cytoplasmic side of the membrane; sequence MSASTHSHKR…GEWSLPEKRS (119 aa). A compositionally biased stretch (polar residues) spans 33-50; sequence NNDSVANTDPQSNENGHT. The chain crosses the membrane as a helical; Signal-anchor for type II membrane protein span at residues 120 to 140; it reads YVLVFTLIALSVLVLLVILIP. Topologically, residues 141-931 are lumenal; it reads SKLLPTKITR…RFDNTEVLHL (791 aa). The N-linked (GlcNAc...) asparagine glycan is linked to Asn377. Catalysis depends on Ser785, which acts as the Charge relay system. Asn814 carries N-linked (GlcNAc...) asparagine glycosylation. Active-site charge relay system residues include Asp863 and His896.

It belongs to the peptidase S9B family.

The protein localises to the vacuole membrane. Functionally, responsible for the proteolytic maturation of the alpha-factor precursor. The chain is Dipeptidyl aminopeptidase A (STE13) from Saccharomyces cerevisiae (strain ATCC 204508 / S288c) (Baker's yeast).